Consider the following 221-residue polypeptide: Enolase-phosphatase E1 (221 aa).

This sequence belongs to the HAD-like hydrolase superfamily. MasA/MtnC family. Monomer. Mg(2+) serves as cofactor.

The enzyme catalyses 5-methylsulfanyl-2,3-dioxopentyl phosphate + H2O = 1,2-dihydroxy-5-(methylsulfanyl)pent-1-en-3-one + phosphate. Its pathway is amino-acid biosynthesis; L-methionine biosynthesis via salvage pathway; L-methionine from S-methyl-5-thio-alpha-D-ribose 1-phosphate: step 3/6. It functions in the pathway amino-acid biosynthesis; L-methionine biosynthesis via salvage pathway; L-methionine from S-methyl-5-thio-alpha-D-ribose 1-phosphate: step 4/6. In terms of biological role, bifunctional enzyme that catalyzes the enolization of 2,3-diketo-5-methylthiopentyl-1-phosphate (DK-MTP-1-P) into the intermediate 2-hydroxy-3-keto-5-methylthiopentenyl-1-phosphate (HK-MTPenyl-1-P), which is then dephosphorylated to form the acireductone 1,2-dihydroxy-3-keto-5-methylthiopentene (DHK-MTPene). This chain is Enolase-phosphatase E1, found in Hydrogenobaculum sp. (strain Y04AAS1).